Consider the following 427-residue polypeptide: Trigger factor (427 aa).

The region spanning 163 to 248 (GDTVVIDFVG…IHEVKTKEVP (86 aa)) is the PPIase FKBP-type domain.

Belongs to the FKBP-type PPIase family. Tig subfamily.

The protein resides in the cytoplasm. It carries out the reaction [protein]-peptidylproline (omega=180) = [protein]-peptidylproline (omega=0). In terms of biological role, involved in protein export. Acts as a chaperone by maintaining the newly synthesized protein in an open conformation. Functions as a peptidyl-prolyl cis-trans isomerase. This Streptococcus pyogenes serotype M18 (strain MGAS8232) protein is Trigger factor.